The following is a 399-amino-acid chain: Lipid droplet-regulating VLDL assembly factor AUP1 (399 aa).

The Cytoplasmic portion of the chain corresponds to 1–21 (MEQPSLESMLELQRFPRNPFS). An intramembrane segment occupies 22-42 (LVLLLLYFPFGLCLFLIRLFI). Topologically, residues 43 to 399 (GAHVFLVSCV…GEEEEEGARG (357 aa)) are cytoplasmic. In terms of domain architecture, CUE spans 284 to 326 (THIQMAQHVKEVLPQVPLSAIHRDLGHTGCVDTTITNFLEGRV). Residues 332-364 (EEETTGAAEGTSKSRVSRPLPQGFAKKPEDRHL) form a disordered region.

It belongs to the AUP1 family.

It is found in the endoplasmic reticulum membrane. Its subcellular location is the lipid droplet. Plays a role in the translocation of terminally misfolded proteins from the endoplasmic reticulum lumen to the cytoplasm and their degradation by the proteasome. Plays a role in lipid droplet formation. Induces lipid droplet clustering. This chain is Lipid droplet-regulating VLDL assembly factor AUP1, found in Xenopus laevis (African clawed frog).